Consider the following 307-residue polypeptide: UDP-3-O-acyl-N-acetylglucosamine deacetylase (307 aa).

Residues His80, His239, and Asp243 each coordinate Zn(2+). His266 acts as the Proton donor in catalysis.

It belongs to the LpxC family. Zn(2+) serves as cofactor.

It catalyses the reaction a UDP-3-O-[(3R)-3-hydroxyacyl]-N-acetyl-alpha-D-glucosamine + H2O = a UDP-3-O-[(3R)-3-hydroxyacyl]-alpha-D-glucosamine + acetate. It participates in glycolipid biosynthesis; lipid IV(A) biosynthesis; lipid IV(A) from (3R)-3-hydroxytetradecanoyl-[acyl-carrier-protein] and UDP-N-acetyl-alpha-D-glucosamine: step 2/6. Functionally, catalyzes the hydrolysis of UDP-3-O-myristoyl-N-acetylglucosamine to form UDP-3-O-myristoylglucosamine and acetate, the committed step in lipid A biosynthesis. The chain is UDP-3-O-acyl-N-acetylglucosamine deacetylase from Neisseria meningitidis serogroup A / serotype 4A (strain DSM 15465 / Z2491).